Consider the following 632-residue polypeptide: Serine/threonine-protein kinase plk-2 (632 aa).

The interval 1 to 26 (MQRVQPSAARVKSQKKEKAPPDVPDV) is disordered. The Protein kinase domain maps to 36–287 (YEKGKFLGKG…ARAVCRDHFF (252 aa)). ATP is bound by residues 42–50 (LGKGGFAHC) and lysine 65. The active-site Proton acceptor is the aspartate 159. The segment at 313 to 334 (AEENVSPSGTIDQRGPHQAGRS) is disordered. POLO box domains lie at 405–484 (WISK…YMND) and 506–588 (TLRV…RLVE).

Belongs to the protein kinase superfamily. Ser/Thr protein kinase family. CDC5/Polo subfamily. In terms of assembly, interacts (via POLO box domain) with mex-5 and mex-6. Interacts (via POLO box domain) with him-8 (via N-terminus); the interaction mediates plk-2 recruitment to the pairing region of X chromosomes during meiosis. Interacts with sun-1. May interact with nicotinic acetylcholine receptor. The cofactor is Mg(2+). As to expression, expressed in oocytes.

It is found in the nucleus. Its subcellular location is the cytoplasm. The protein resides in the cytoskeleton. The protein localises to the microtubule organizing center. It localises to the centrosome. It is found in the chromosome. Its subcellular location is the centromere. The protein resides in the kinetochore. The enzyme catalyses L-seryl-[protein] + ATP = O-phospho-L-seryl-[protein] + ADP + H(+). It carries out the reaction L-threonyl-[protein] + ATP = O-phospho-L-threonyl-[protein] + ADP + H(+). Its function is as follows. Serine/threonine-protein kinase which plays a role, during oogenesis, in chromosome pairing and synapsis, by facilitating the recruitment and attachment of meiotic chromosomes to the nuclear envelope during prophase. Promotes the localization of brc-1 to the short arm of homologous chromosomes during meiotic prophase I. Regulates the formation of sun-1 patches along the nuclear envelope. Promotes meiotic nuclei apoptosis in response to chromosomal asynapsis. Plays a redundant role with plk-1 in the establishment of cell polarity downstream of mex-5 and mex-6 during the first embryonic cell divisions. Plays a role in nicotinic acetylcholine receptor-mediated sensitivity to nicotine but not levamisole. Regulates motility. The sequence is that of Serine/threonine-protein kinase plk-2 from Caenorhabditis elegans.